Reading from the N-terminus, the 205-residue chain is uncharacterized protein (205 aa).

A coiled-coil region spans residues 10-75 (QDLLSAVDQQ…AANLMTVMTD (66 aa)). The interval 111 to 138 (PLSNTNNEQTSPPASGKTSETPKKNPTN) is disordered. The span at 112 to 138 (LSNTNNEQTSPPASGKTSETPKKNPTN) shows a compositional bias: polar residues.

The protein belongs to the asfivirus K205R family.

It is found in the host cytoplasm. Induces host endoplasmic reticulum stress and consequently activates autophagy and NF-kappa-B signaling pathway. In turn, may induce autophagy-mediated STING1 degradation and innate immune evasion. This is an uncharacterized protein from Ornithodoros (relapsing fever ticks).